The sequence spans 184 residues: Transmembrane protein 140 (184 aa).

Residues Met1–Ser12 lie on the Cytoplasmic side of the membrane. A helical membrane pass occupies residues Phe13–Trp33. The Extracellular segment spans residues Lys34 to Arg83. N-linked (GlcNAc...) asparagine glycosylation occurs at Asn37. A helical transmembrane segment spans residues Leu84–Gln104. Residues Cys105–Gly117 are Cytoplasmic-facing. Residues Phe118–Trp138 form a helical membrane-spanning segment. The Extracellular segment spans residues Lys139–Gly149. Residues Phe150–Phe170 form a helical membrane-spanning segment. Residues Pro171–Cys184 are Cytoplasmic-facing.

The protein resides in the membrane. This is Transmembrane protein 140 (Tmem140) from Rattus norvegicus (Rat).